A 207-amino-acid polypeptide reads, in one-letter code: Probable glutathione S-transferase 5 (207 aa).

In terms of domain architecture, GST N-terminal spans 2–81 (VSYKLTYFNG…FLAREFKLNG (80 aa)). Glutathione-binding positions include Y8, W39, K43, 51–53 (GQL), and 65–66 (QS). A GST C-terminal domain is found at 83–207 (TAWEEAQVNS…WIETRPVTPF (125 aa)).

This sequence belongs to the GST superfamily. Sigma family.

It carries out the reaction RX + glutathione = an S-substituted glutathione + a halide anion + H(+). Conjugation of reduced glutathione to a wide number of exogenous and endogenous hydrophobic electrophiles. May play a role in the detoxification of reactive oxygen species produced during pathogenic bacterial infection. The polypeptide is Probable glutathione S-transferase 5 (gst-5) (Caenorhabditis elegans).